The primary structure comprises 22 residues: Caerin-3.3 (22 aa).

At lysine 22 the chain carries Lysine amide.

Expressed by the skin parotoid and/or rostral glands.

The protein resides in the secreted. In terms of biological role, antibacterial peptide, that adopts an alpha helical conformation which can disrupt bacterial membranes. Each caerin displays a different antimicrobial specificity. In Ranoidea caerulea (Green tree frog), this protein is Caerin-3.3.